A 295-amino-acid chain; its full sequence is Pyridoxal 5'-phosphate synthase subunit PdxS (295 aa).

Residue aspartate 25 participates in D-ribose 5-phosphate binding. Lysine 82 (schiff-base intermediate with D-ribose 5-phosphate) is an active-site residue. Position 154 (glycine 154) interacts with D-ribose 5-phosphate. Arginine 166 provides a ligand contact to D-glyceraldehyde 3-phosphate. Residues glycine 215 and 236–237 (GS) contribute to the D-ribose 5-phosphate site.

The protein belongs to the PdxS/SNZ family. As to quaternary structure, in the presence of PdxT, forms a dodecamer of heterodimers.

It catalyses the reaction aldehydo-D-ribose 5-phosphate + D-glyceraldehyde 3-phosphate + L-glutamine = pyridoxal 5'-phosphate + L-glutamate + phosphate + 3 H2O + H(+). The protein operates within cofactor biosynthesis; pyridoxal 5'-phosphate biosynthesis. Its function is as follows. Catalyzes the formation of pyridoxal 5'-phosphate from ribose 5-phosphate (RBP), glyceraldehyde 3-phosphate (G3P) and ammonia. The ammonia is provided by the PdxT subunit. Can also use ribulose 5-phosphate and dihydroxyacetone phosphate as substrates, resulting from enzyme-catalyzed isomerization of RBP and G3P, respectively. The polypeptide is Pyridoxal 5'-phosphate synthase subunit PdxS (Heliobacterium modesticaldum (strain ATCC 51547 / Ice1)).